Consider the following 206-residue polypeptide: 2,3-bisphosphoglycerate-dependent phosphoglycerate mutase (206 aa).

Substrate contacts are provided by residues 9–16, 22–23, Arg61, 88–91, Lys99, 115–116, and 159–160; these read RHGQSEWN, TG, ERDY, RR, and GN. The active-site Tele-phosphohistidine intermediate is His10. Glu88 acts as the Proton donor/acceptor in catalysis.

This sequence belongs to the phosphoglycerate mutase family. BPG-dependent PGAM subfamily. In terms of assembly, homodimer.

It catalyses the reaction (2R)-2-phosphoglycerate = (2R)-3-phosphoglycerate. The protein operates within carbohydrate degradation; glycolysis; pyruvate from D-glyceraldehyde 3-phosphate: step 3/5. Functionally, catalyzes the interconversion of 2-phosphoglycerate and 3-phosphoglycerate. This Chelativorans sp. (strain BNC1) protein is 2,3-bisphosphoglycerate-dependent phosphoglycerate mutase.